The primary structure comprises 117 residues: Nuclear transition protein 2 (117 aa).

The tract at residues 1–117 is disordered; sequence MDTKMQSLPT…KRRSSGRRYK (117 aa). Over residues 7–26 the composition is skewed to low complexity; sequence SLPTTHPHPHSSSRPQSHTS. Zn(2+) contacts are provided by His12, His14, His16, His24, Cys32, Cys34, Cys38, and Cys41. Low complexity predominate over residues 44-53; the sequence is AGHAGSSSSP. Composition is skewed to basic residues over residues 60–77 and 93–117; these read KHPKPSVHSRHSPARPSH and SKRKAVRRRKRTHRAKRRSSGRRYK. Positions 90 to 98 match the Nuclear localization signal motif; the sequence is GKVSKRKAV. Phosphoserine is present on Ser112.

This sequence belongs to the nuclear transition protein 2 family.

It is found in the nucleus. The protein resides in the chromosome. Functionally, plays a key role in the replacement of histones to protamine in the elongating spermatids of mammals. In condensing spermatids, loaded onto the nucleosomes, where it promotes the recruitment and processing of protamines, which are responsible for histone eviction. The histone H2AB1-H2BC1/TH2B dimer is required for loading of TNP2 onto chromatin. This Mus musculus (Mouse) protein is Nuclear transition protein 2.